The sequence spans 319 residues: Cobalamin biosynthesis protein CobD (319 aa).

The next 5 membrane-spanning stretches (helical) occupy residues 56–76 (VMWL…LALA), 78–98 (GIHP…ALAG), 153–173 (VDGI…LAMA), 204–224 (VANF…AVLC), and 296–316 (LMWV…YWLV).

It belongs to the CobD/CbiB family.

It localises to the cell membrane. The protein operates within cofactor biosynthesis; adenosylcobalamin biosynthesis. In terms of biological role, converts cobyric acid to cobinamide by the addition of aminopropanol on the F carboxylic group. This chain is Cobalamin biosynthesis protein CobD, found in Klebsiella pneumoniae subsp. pneumoniae (strain ATCC 700721 / MGH 78578).